A 162-amino-acid chain; its full sequence is Large ribosomal subunit protein uL10 (162 aa).

The protein belongs to the universal ribosomal protein uL10 family. As to quaternary structure, part of the ribosomal stalk of the 50S ribosomal subunit. The N-terminus interacts with L11 and the large rRNA to form the base of the stalk. The C-terminus forms an elongated spine to which L12 dimers bind in a sequential fashion forming a multimeric L10(L12)X complex.

Its function is as follows. Forms part of the ribosomal stalk, playing a central role in the interaction of the ribosome with GTP-bound translation factors. The protein is Large ribosomal subunit protein uL10 of Acholeplasma laidlawii (strain PG-8A).